The chain runs to 108 residues: uncharacterized protein (108 aa).

The protein to M.jannaschii MJ1245 and M.thermoautotrophicum MTH1110.

This is an uncharacterized protein from Methanocaldococcus jannaschii (strain ATCC 43067 / DSM 2661 / JAL-1 / JCM 10045 / NBRC 100440) (Methanococcus jannaschii).